The sequence spans 96 residues: Co-chaperonin GroES (96 aa).

The protein belongs to the GroES chaperonin family. In terms of assembly, heptamer of 7 subunits arranged in a ring. Interacts with the chaperonin GroEL.

It is found in the cytoplasm. In terms of biological role, together with the chaperonin GroEL, plays an essential role in assisting protein folding. The GroEL-GroES system forms a nano-cage that allows encapsulation of the non-native substrate proteins and provides a physical environment optimized to promote and accelerate protein folding. GroES binds to the apical surface of the GroEL ring, thereby capping the opening of the GroEL channel. This chain is Co-chaperonin GroES, found in Geotalea uraniireducens (strain Rf4) (Geobacter uraniireducens).